A 239-amino-acid polypeptide reads, in one-letter code: Sugar fermentation stimulation protein homolog (239 aa).

This sequence belongs to the SfsA family.

The chain is Sugar fermentation stimulation protein homolog from Alcanivorax borkumensis (strain ATCC 700651 / DSM 11573 / NCIMB 13689 / SK2).